A 349-amino-acid chain; its full sequence is AA9 family lytic polysaccharide monooxygenase A (349 aa).

Positions 1-19 are cleaved as a signal peptide; that stretch reads MKSTFGLLALAAAAKLVSA. 2 residues coordinate Cu(2+): His20 and His102. A disulfide bridge connects residues Cys62 and Cys183. Residue His169 participates in O2 binding. Tyr180 is a binding site for Cu(2+). The segment at 233–304 is disordered; the sequence is DGSSSGSSGS…SGSNSGSDSC (72 aa). Composition is skewed to low complexity over residues 234–262 and 269–304; these read GSSS…AVPT and TSAT…SDSC. In terms of domain architecture, CBM1 spans 311 to 347; the sequence is GSVKIYGQCGGQNYSGPTSCEAGLICKEWNPYYHQCV. N-linked (GlcNAc...) asparagine glycosylation is present at Asn323.

This sequence belongs to the polysaccharide monooxygenase AA9 family. It depends on Cu(2+) as a cofactor.

The protein localises to the secreted. The enzyme catalyses [(1-&gt;4)-beta-D-glucosyl]n+m + reduced acceptor + O2 = 4-dehydro-beta-D-glucosyl-[(1-&gt;4)-beta-D-glucosyl]n-1 + [(1-&gt;4)-beta-D-glucosyl]m + acceptor + H2O.. Its function is as follows. Lytic polysaccharide monooxygenase (LPMO) that depolymerizes crystalline and amorphous polysaccharides via the oxidation of scissile alpha- or beta-(1-4)-glycosidic bonds, yielding C4 oxidation products. Catalysis by LPMOs requires the reduction of the active-site copper from Cu(II) to Cu(I) by a reducing agent and H(2)O(2) or O(2) as a cosubstrate. The protein is AA9 family lytic polysaccharide monooxygenase A (eglD) of Aspergillus fumigatus (strain CBS 144.89 / FGSC A1163 / CEA10) (Neosartorya fumigata).